Reading from the N-terminus, the 104-residue chain is Elicitor peptide 6 (104 aa).

Residues 1 to 81 (MEVNGEEERR…TVEETGFMAR (81 aa)) constitute a propeptide that is removed on maturation. Residues 48 to 61 (SSSIPPSSSSSSPS) are compositionally biased toward low complexity. A disordered region spans residues 48–104 (SSSIPPSSSSSSPSLVEEEDSGTETVEETGFMARITAVLRRRPRPPPYSSGRPGQNN). Acidic residues predominate over residues 63-74 (VEEEDSGTETVE).

The protein belongs to the brassicaceae elicitor peptide family.

Functionally, elicitor of plant defense. This is Elicitor peptide 6 (PEP6) from Arabidopsis thaliana (Mouse-ear cress).